The sequence spans 75 residues: Acyl carrier protein (75 aa).

A Carrier domain is found at 1-75 (MSVFDKVKSI…DAVNYIKENQ (75 aa)). Ser35 bears the O-(pantetheine 4'-phosphoryl)serine mark.

Belongs to the acyl carrier protein (ACP) family. 4'-phosphopantetheine is transferred from CoA to a specific serine of apo-ACP by AcpS. This modification is essential for activity because fatty acids are bound in thioester linkage to the sulfhydryl of the prosthetic group.

It localises to the cytoplasm. The protein operates within lipid metabolism; fatty acid biosynthesis. Its function is as follows. Carrier of the growing fatty acid chain in fatty acid biosynthesis. In Desulfitobacterium hafniense (strain Y51), this protein is Acyl carrier protein.